Here is a 315-residue protein sequence, read N- to C-terminus: Small ribosomal subunit protein uS3 (315 aa).

One can recognise a KH type-2 domain in the interval 38-106 (IRKMMSRGME…QVQLNILEVK (69 aa)). The tract at residues 211–315 (AEREAQEALQ…VANTPEKAEE (105 aa)) is disordered. Over residues 222 to 232 (QTRRERPRRGP) the composition is skewed to basic residues. Residues 265–315 (APAETPAGEAAATEPTAPVAEPATAAASAPAEAASAPAEAAVANTPEKAEE) show a composition bias toward low complexity.

The protein belongs to the universal ribosomal protein uS3 family. Part of the 30S ribosomal subunit. Forms a tight complex with proteins S10 and S14.

In terms of biological role, binds the lower part of the 30S subunit head. Binds mRNA in the 70S ribosome, positioning it for translation. This Frankia casuarinae (strain DSM 45818 / CECT 9043 / HFP020203 / CcI3) protein is Small ribosomal subunit protein uS3.